Consider the following 101-residue polypeptide: Urease subunit beta (101 aa).

This sequence belongs to the urease beta subunit family. Heterotrimer of UreA (gamma), UreB (beta) and UreC (alpha) subunits. Three heterotrimers associate to form the active enzyme.

Its subcellular location is the cytoplasm. It catalyses the reaction urea + 2 H2O + H(+) = hydrogencarbonate + 2 NH4(+). The protein operates within nitrogen metabolism; urea degradation; CO(2) and NH(3) from urea (urease route): step 1/1. In Rhizobium etli (strain CIAT 652), this protein is Urease subunit beta.